We begin with the raw amino-acid sequence, 116 residues long: U16-barytoxin-Tl1a (116 aa).

A signal peptide spans Met-1–Ala-20. Residues Lys-21–Arg-74 constitute a propeptide that is removed on maturation. 3 cysteine pairs are disulfide-bonded: Cys-75/Cys-90, Cys-82/Cys-95, and Cys-89/Cys-110.

It belongs to the neurotoxin 14 (magi-1) family. 06 (ICK-Trit) subfamily. In terms of tissue distribution, expressed by the venom gland.

The protein resides in the secreted. Functionally, ion channel inhibitor. The protein is U16-barytoxin-Tl1a of Trittame loki (Brush-footed trapdoor spider).